The primary structure comprises 489 residues: Cytochrome P450 monooxygenase ataF (489 aa).

Residues 12–32 traverse the membrane as a helical segment; it reads WLEHSAVIATLFAFGTALFLV. Asn-289 carries N-linked (GlcNAc...) asparagine glycosylation. Cys-434 is a binding site for heme.

This sequence belongs to the cytochrome P450 family. Heme serves as cofactor.

The protein localises to the membrane. It functions in the pathway mycotoxin biosynthesis. In terms of biological role, cytochrome P450 monooxygenase; part of the gene cluster that mediates the biosynthesis of acetylaranotin, a member of the epipolythiodioxopiperazine (ETP) class of toxins characterized by a disulfide-bridged cyclic dipeptide. The first step of acetylaranotin biosynthesis is performed by the NRPS ataP which produces diketopiperazine cyclo-L-Phe-L-Phe via the condensation of 2 phenylalanines (L-Phe). The ataC domain of ataTC then catalyzes the formation of bishydroxylation of cyclo-L-Phe-L-Phe. The glutathione S-transferase domain ataG in ataIMG further catalyzes the conjugation of two glutathiones to the bishydroxylated intermediate. Next, the dipeptidase ataJ removes the Glu residues. The following step is performed by the carbon sulfur lyase domain ataI of ataIMG which may convert the bis-cysteinyl adduct to yield an epidithiol intermediate. The ataT domain from ataTC then catalyzes the oxidation of the free dithiols, followed by a cyclization step catalyzed by the cytochrome P450 ataF. AtaF probably acts as an epoxidase to promote a dual epoxidation formation at C8 and C9 along with C8' and C9', followed by the spontaneous nucleophilic attack of the amide nitrogens N10 and N10' to yield an intermediate with the pyrrolidine partial structure. The final steps of acetylaranotin biosynthesis involve the acetylation and ring rearrangement of an epitetrathiodiketopiperazine intermediate to produce acetylaranotin. AtaH probably catalyzes the acetylation of epitetrathiodiketopiperazine to produce a diacetate and ataY is responsible for the formation of the dihydrooxepin moiety that converts the diacetate intermediate to acetylaranotin via acetylapoaranotin. Both enzymes could function independently in the absence of the other. The acetylaranotin bis-thiomethyltransferase ataS located outside of acetylaranotin gene cluster is the main thiomethyltransferase responsible for converting acetylaranotin and its related intermediates to their methylated forms. This Aspergillus terreus (strain NIH 2624 / FGSC A1156) protein is Cytochrome P450 monooxygenase ataF.